Here is a 458-residue protein sequence, read N- to C-terminus: Chondroitin hydrolase (458 aa).

The first 22 residues, 1 to 22 (MVIVWYHQLLLVLLIFIGAAKG), serve as a signal peptide directing secretion. The region spanning 358–401 (NLDKCRMERCEGRGECYLPRPKTNPAIYNFACRCERPYFGKSCE) is the EGF-like domain. Disulfide bonds link C362-C373, C367-C389, and C391-C400.

This sequence belongs to the glycosyl hydrolase 56 family.

Functionally, endo-beta-galactosaminidase that specifically hydrolyzes chondroitin, releasing GlcUA-beta-(1-&gt;3)-GalNAc-beta-(1-&gt;4)-GlcUA-beta-(1-&gt;3)-GalNAc as the main product. Also hydrolyzes to a lesser extent chondroitin sulfates (CS-A, CS-C) and hyaluronic acid. May regulate the function of chondroitin in cell division. The polypeptide is Chondroitin hydrolase (Caenorhabditis elegans).